The following is a 528-amino-acid chain: Serine/threonine-protein kinase akt-2 (528 aa).

Residues 12–115 enclose the PH domain; sequence DIVIESWLHK…WIEAIQAVSS (104 aa). A disordered region spans residues 121 to 153; that stretch reads ENAGNTSMQEEDTNGNPSGESDVNMDATSTRSD. Polar residues predominate over residues 123–153; it reads AGNTSMQEEDTNGNPSGESDVNMDATSTRSD. Positions 180–437 constitute a Protein kinase domain; the sequence is FDFLKVLGQG…AREVSRAEFF (258 aa). Residues 186–194 and Lys-209 each bind ATP; that span reads LGQGTFGKV. The active-site Proton acceptor is the Asp-303. An AGC-kinase C-terminal domain is found at 438 to 515; the sequence is KDVDWEATLR…YYVSGSLERS (78 aa).

Belongs to the protein kinase superfamily. AGC Ser/Thr protein kinase family. RAC subfamily. In terms of assembly, interacts with pdk-1, sgk-1, akt-1 and daf-16. Part of a complex containing sgk-1, akt-1 and akt-2. Mg(2+) serves as cofactor. In terms of tissue distribution, expressed in neurons, muscle cells of the pharynx, rectal gland cells, and spermatheca.

It carries out the reaction L-seryl-[protein] + ATP = O-phospho-L-seryl-[protein] + ADP + H(+). The enzyme catalyses L-threonyl-[protein] + ATP = O-phospho-L-threonyl-[protein] + ADP + H(+). Phosphorylated and activated by pdk-1. In terms of biological role, acts downstream of PI3 kinase age-1 and kinase pdk-1 in the daf-2/insulin receptor-like transduction pathway. Essential role in regulating developmental arrest at the dauer stage. Phosphorylates Forkhead-related daf-16 and the longevity-promoting skn-1 transcription factors, which inhibits their entry into the nucleus and antagonizes their functions. Role in immune function and pathogen resistance. Downstream of age-1 and together with akt-1 and sgk-1, promotes cell survival during embryonic development. Plays a role in maintaining the gonadal basement membrane through antagonizing akt-1 activity. The chain is Serine/threonine-protein kinase akt-2 from Caenorhabditis elegans.